A 343-amino-acid chain; its full sequence is tRNA N6-adenosine threonylcarbamoyltransferase (343 aa).

Fe cation contacts are provided by His-115 and His-119. Substrate is bound by residues Leu-138–Ala-142, Asp-171, Gly-184, and Asn-276. Fe cation is bound at residue Asp-304.

The protein belongs to the KAE1 / TsaD family. Requires Fe(2+) as cofactor.

The protein resides in the cytoplasm. The enzyme catalyses L-threonylcarbamoyladenylate + adenosine(37) in tRNA = N(6)-L-threonylcarbamoyladenosine(37) in tRNA + AMP + H(+). Its function is as follows. Required for the formation of a threonylcarbamoyl group on adenosine at position 37 (t(6)A37) in tRNAs that read codons beginning with adenine. Is involved in the transfer of the threonylcarbamoyl moiety of threonylcarbamoyl-AMP (TC-AMP) to the N6 group of A37, together with TsaE and TsaB. TsaD likely plays a direct catalytic role in this reaction. This is tRNA N6-adenosine threonylcarbamoyltransferase from Buchnera aphidicola subsp. Cinara cedri (strain Cc).